A 377-amino-acid chain; its full sequence is DNA-directed RNA polymerase subunit alpha (377 aa).

Positions 1–259 are alpha N-terminal domain (alpha-NTD); it reads MSDSSHNLLY…KHFSVFEKMD (259 aa). The alpha C-terminal domain (alpha-CTD) stretch occupies residues 279 to 377; that stretch reads ILHKLVLGIN…KIRSSKNTKG (99 aa).

The protein belongs to the RNA polymerase alpha chain family. In terms of assembly, homodimer. The RNAP catalytic core consists of 2 alpha, 1 beta, 1 beta' and 1 omega subunit. When a sigma factor is associated with the core the holoenzyme is formed, which can initiate transcription.

The enzyme catalyses RNA(n) + a ribonucleoside 5'-triphosphate = RNA(n+1) + diphosphate. DNA-dependent RNA polymerase catalyzes the transcription of DNA into RNA using the four ribonucleoside triphosphates as substrates. The protein is DNA-directed RNA polymerase subunit alpha of Chlamydia trachomatis serovar L2 (strain ATCC VR-902B / DSM 19102 / 434/Bu).